The sequence spans 534 residues: Acetyltransferase MATC1 (534 aa).

Catalysis depends on proton acceptor residues histidine 186 and aspartate 459.

This sequence belongs to the plant acyltransferase family.

The protein resides in the cell membrane. The protein operates within secondary metabolite biosynthesis. Acetyltransferase; part of the gene cluster that mediates the biosynthesis of mannosylerythritol lipids (MELs), surface-active substances that enhance the availability of water-insoluble substrates. Mannosylerythritol lipid production is responsible for hemolytic activity of Ustilago maydis. Depending on the number of acetyl groups, mannosylerythritol lipids can be differentiated into MEL A (fully acetylated), MEL B and MEL C (monoacetylated at R-6 and R-4, respectively), and the fully deacetylated MEL D. The first step in the pathway is the generation of mannosylerythritol by the glycosyltransferase EMT1 which catalyzes the transfer of GDP-mannose to the C-4 atom of meso-erythritol. This reaction has to be stereospecific, since only mannosyl-D-erythritol is generated. The produced disaccharide is subsequently acylated with fatty acids of various lengths derived from the peroxisomal beta-oxidation by the peroxisomal acyltransferases MAC1 and MAC2 at positions C-2 and C-3, repectively. The existence of MEL derivatives which carry an acetyl group at C-2 implies that at least MAC1 also accepts acetyl-CoA as a donor. The final step of MEL biosynthesis is the acetylation of the fully acylated mannosylerythritol lipids catalyzed by the acetyl-CoA-dependent acetyltransferase MAT1. MAT1 displays a relaxed regioselectivity and is able to transfer acetylgroups to both positions C-4 and C-6 of the mannosyl moiety. This is Acetyltransferase MATC1 from Mycosarcoma maydis (Corn smut fungus).